Consider the following 499-residue polypeptide: Glucose-6-phosphate exchanger SLC37A2 (499 aa).

Residues tyrosine 21–arginine 40 form a helical membrane-spanning segment. Asparagine 53, asparagine 62, and asparagine 66 each carry an N-linked (GlcNAc...) asparagine glycan. 11 helical membrane-spanning segments follow: residues glycine 86–phenylalanine 106, leucine 116–tryptophan 136, tyrosine 143–valine 163, alanine 187–leucine 207, serine 208–valine 228, leucine 302–isoleucine 322, glycine 334–isoleucine 354, alanine 362–phenylalanine 382, isoleucine 391–alanine 411, alanine 434–leucine 454, and glycine 458–alanine 478.

This sequence belongs to the major facilitator superfamily. Organophosphate:Pi antiporter (OPA) (TC 2.A.1.4) family.

It is found in the endoplasmic reticulum membrane. The catalysed reaction is D-glucose 6-phosphate(in) + phosphate(out) = D-glucose 6-phosphate(out) + phosphate(in). Inorganic phosphate and glucose-6-phosphate antiporter. May transport cytoplasmic glucose-6-phosphate into the lumen of the endoplasmic reticulum and translocate inorganic phosphate into the opposite direction. The polypeptide is Glucose-6-phosphate exchanger SLC37A2 (Xenopus laevis (African clawed frog)).